The primary structure comprises 690 residues: MLRGQEERKYSIRKYSIGVVSVLAATMFVVSSHEAQASEKTSTNAAAQKETLNQPGEQGNAITSHQMQSGKQLDDMHKENGKSGTVTEGKDTLQSSKHQSTQNSKTIRTQNDNQVKQDSERQGSKQSHQNNATNNTERQNDQVQNTHHAERNGSQSTTSQSNDVDKSQPSIPAQKVIPNHDKAAPTSTTPPSNDKTAPKSTKAQDATTDKHPNQQDTHQPAHQIIDAKQDDTVRQSEQKPQVGDLSKHIDGQNSPEKPTDKNTDNKQLIKDALQAPKTRSTTNAAADAKKVRPLKANQVQPLNKYPVVFVHGFLGLVGDNAPALYPNYWGGNKFKVIEELRKQGYNVHQASVSAFGSNYDRAVELYYYIKGGRVDYGAAHAAKYGHERYGKTYKGIMPNWEPGKKVHLVGHSMGGQTIRLMEEFLRNGNKEEIAYHKAHGGEISPLFTGGHNNMVASITTLATPHNGSQAADKFGNTEAVRKIMFALNRFMGNKYSNIDLGLTQWGFKQLPNESYIDYIKRVSKSKIWTSDDNAAYDLTLDGSAKLNNMTSMNPNITYTTYTGVSSHTGPLGYENPDLGTFFLMATTSRIIGHDAREEWRKNDGVVPVISSLHPSNQPFVNVTNDEPATRRGIWQVKPIIQGWDHVDFIGVDFLDFKRKGAELANFYTGIINDLLRVEATESKGTQLKAS.

Residues 1 to 37 (MLRGQEERKYSIRKYSIGVVSVLAATMFVVSSHEAQA) form the signal peptide. Over residues 52–71 (LNQPGEQGNAITSHQMQSGK) the composition is skewed to polar residues. A disordered region spans residues 52–266 (LNQPGEQGNA…KPTDKNTDNK (215 aa)). Basic and acidic residues predominate over residues 72-81 (QLDDMHKENG). Polar residues-rich tracts occupy residues 82–114 (KSGT…NDNQ), 124–171 (SKQS…QPSI), and 185–206 (PTST…AQDA). Composition is skewed to basic and acidic residues over residues 225-237 (IDAK…RQSE) and 257-266 (KPTDKNTDNK). Catalysis depends on charge relay system residues Ser-412 and His-645.

Belongs to the AB hydrolase superfamily. Lipase family.

It is found in the secreted. It carries out the reaction a triacylglycerol + H2O = a diacylglycerol + a fatty acid + H(+). This is Lipase 2 (lip2) from Staphylococcus aureus (strain NCTC 8325 / PS 47).